Consider the following 197-residue polypeptide: Peptide deformylase (197 aa).

Residues Cys-106 and His-148 each contribute to the Fe cation site. Glu-149 is an active-site residue. His-152 contributes to the Fe cation binding site.

Belongs to the polypeptide deformylase family. It depends on Fe(2+) as a cofactor.

The enzyme catalyses N-terminal N-formyl-L-methionyl-[peptide] + H2O = N-terminal L-methionyl-[peptide] + formate. Its function is as follows. Removes the formyl group from the N-terminal Met of newly synthesized proteins. Requires at least a dipeptide for an efficient rate of reaction. N-terminal L-methionine is a prerequisite for activity but the enzyme has broad specificity at other positions. The chain is Peptide deformylase from Mycolicibacterium gilvum (strain PYR-GCK) (Mycobacterium gilvum (strain PYR-GCK)).